The sequence spans 133 residues: Small ribosomal subunit protein uS8 (133 aa).

The protein belongs to the universal ribosomal protein uS8 family. In terms of assembly, part of the 30S ribosomal subunit. Contacts proteins S5 and S12.

One of the primary rRNA binding proteins, it binds directly to 16S rRNA central domain where it helps coordinate assembly of the platform of the 30S subunit. In Mycoplasmoides gallisepticum (strain R(low / passage 15 / clone 2)) (Mycoplasma gallisepticum), this protein is Small ribosomal subunit protein uS8.